We begin with the raw amino-acid sequence, 118 residues long: UPF0382 membrane protein C1782.12c (118 aa).

An N-terminal signal peptide occupies residues 1–18; the sequence is MTIWNVAALTGLLSVGLG. Residues 19–40 lie on the Lumenal side of the membrane; sequence AYGSHGLQKRVQDPHLLKSWST. The helical transmembrane segment at 41 to 61 threads the bilayer; sequence ACTYLMFHSLATMAVSLHPVY. The Cytoplasmic portion of the chain corresponds to 62 to 67; it reads GKSRWT. Residues 68–88 form a helical membrane-spanning segment; that stretch reads GPLLITGSCLFSGTIYGLCLL. Topologically, residues 89–96 are lumenal; that stretch reads PKGHSLRR. The helical transmembrane segment at 97–117 threads the bilayer; that stretch reads ILGPLTPIGGLVMLTGWATML. Valine 118 is a topological domain (cytoplasmic).

This sequence belongs to the UPF0382 family.

Its subcellular location is the endoplasmic reticulum membrane. This Schizosaccharomyces pombe (strain 972 / ATCC 24843) (Fission yeast) protein is UPF0382 membrane protein C1782.12c.